The following is a 234-amino-acid chain: Cytochrome b (234 aa).

4 helical membrane-spanning segments follow: residues Phe-33–Met-53, Trp-77–Val-98, Trp-113–Leu-133, and Phe-178–Leu-198. The heme b site is built by His-83 and His-97. Heme b-binding residues include His-182 and His-196. His-201 provides a ligand contact to a ubiquinone. The chain crosses the membrane as a helical span at residues Ile-226–Met-234.

It belongs to the cytochrome b family. In terms of assembly, the cytochrome bc1 complex contains 11 subunits: 3 respiratory subunits (MT-CYB, CYC1 and UQCRFS1), 2 core proteins (UQCRC1 and UQCRC2) and 6 low-molecular weight proteins (UQCRH/QCR6, UQCRB/QCR7, UQCRQ/QCR8, UQCR10/QCR9, UQCR11/QCR10 and a cleavage product of UQCRFS1). This cytochrome bc1 complex then forms a dimer. It depends on heme b as a cofactor.

It is found in the mitochondrion inner membrane. In terms of biological role, component of the ubiquinol-cytochrome c reductase complex (complex III or cytochrome b-c1 complex) that is part of the mitochondrial respiratory chain. The b-c1 complex mediates electron transfer from ubiquinol to cytochrome c. Contributes to the generation of a proton gradient across the mitochondrial membrane that is then used for ATP synthesis. The protein is Cytochrome b (MT-CYB) of Lepus alleni (Antelope jackrabbit).